The chain runs to 208 residues: Guanylate kinase (208 aa).

The 182-residue stretch at 4-185 folds into the Guanylate kinase-like domain; the sequence is GNLYILSAPS…ALADFQAILR (182 aa). 11–18 serves as a coordination point for ATP; the sequence is APSGAGKS.

It belongs to the guanylate kinase family.

It is found in the cytoplasm. It catalyses the reaction GMP + ATP = GDP + ADP. In terms of biological role, essential for recycling GMP and indirectly, cGMP. In Pasteurella multocida (strain Pm70), this protein is Guanylate kinase (gmk).